Here is a 155-residue protein sequence, read N- to C-terminus: Protein-export protein SecB (155 aa).

It belongs to the SecB family. Homotetramer, a dimer of dimers. One homotetramer interacts with 1 SecA dimer.

Its subcellular location is the cytoplasm. In terms of biological role, one of the proteins required for the normal export of preproteins out of the cell cytoplasm. It is a molecular chaperone that binds to a subset of precursor proteins, maintaining them in a translocation-competent state. It also specifically binds to its receptor SecA. This chain is Protein-export protein SecB, found in Albidiferax ferrireducens (strain ATCC BAA-621 / DSM 15236 / T118) (Rhodoferax ferrireducens).